The chain runs to 169 residues: Disulfide bond formation protein B 1 (169 aa).

The Cytoplasmic segment spans residues 1–13 (MSALLKPLDNRLF). A helical transmembrane segment spans residues 14 to 30 (WPAVAIGGLLILAFVLY). Over 31-48 (LQHVRGFAPCSLCIFIRL) the chain is Periplasmic. An intrachain disulfide couples Cys-40 to Cys-43. A helical transmembrane segment spans residues 49–64 (DVLGLVLAGIVGSLAP). Over 65–71 (RSRIAGG) the chain is Cytoplasmic. The helical transmembrane segment at 72–89 (IAALGMLAASLGGIYHAW) threads the bilayer. Over 90–145 (SLVAEEKLAAQGMGSCKMFMGFPEWIPLDTWLPQVFQPEGLCGEVVWTLLGQSMAV) the chain is Periplasmic. The cysteines at positions 105 and 131 are disulfide-linked. A helical membrane pass occupies residues 146-164 (WSLALFVFCLLVLAAKLAF). Residues 165–169 (GRRTA) are Cytoplasmic-facing.

This sequence belongs to the DsbB family.

The protein resides in the cell inner membrane. Functionally, required for disulfide bond formation in some periplasmic proteins. Acts by oxidizing the DsbA protein. The chain is Disulfide bond formation protein B 1 from Pseudomonas aeruginosa (strain UCBPP-PA14).